Here is a 340-residue protein sequence, read N- to C-terminus: Uroporphyrinogen decarboxylase (340 aa).

Substrate-binding positions include R21 to R25, F40, D71, Y147, S202, and H316.

It belongs to the uroporphyrinogen decarboxylase family. In terms of assembly, homodimer.

The protein localises to the cytoplasm. The catalysed reaction is uroporphyrinogen III + 4 H(+) = coproporphyrinogen III + 4 CO2. Its pathway is porphyrin-containing compound metabolism; protoporphyrin-IX biosynthesis; coproporphyrinogen-III from 5-aminolevulinate: step 4/4. Functionally, catalyzes the decarboxylation of four acetate groups of uroporphyrinogen-III to yield coproporphyrinogen-III. The protein is Uroporphyrinogen decarboxylase of Helicobacter hepaticus (strain ATCC 51449 / 3B1).